We begin with the raw amino-acid sequence, 272 residues long: HMP-PP phosphatase (272 aa).

Aspartate 8 (nucleophile) is an active-site residue. Mg(2+) is bound by residues aspartate 8, aspartate 10, and aspartate 212.

Belongs to the HAD-like hydrolase superfamily. Cof family. The cofactor is Mg(2+).

The catalysed reaction is 4-amino-2-methyl-5-(diphosphooxymethyl)pyrimidine + H2O = 4-amino-2-methyl-5-(phosphooxymethyl)pyrimidine + phosphate + H(+). Catalyzes the hydrolysis of 4-amino-2-methyl-5-hydroxymethylpyrimidine pyrophosphate (HMP-PP) to 4-amino-2-methyl-5-hydroxymethylpyrimidine phosphate (HMP-P). The protein is HMP-PP phosphatase of Salmonella newport (strain SL254).